Reading from the N-terminus, the 567-residue chain is Geranylgeranyl transferase type-2 subunit alpha (567 aa).

PFTA repeat units follow at residues 44-78 (LDES…QLEV), 88-122 (LVKA…RLPE), 124-158 (NWAR…QAAV), 159-193 (PPAE…QLHP), 207-241 (VLLK…RADP), and 363-397 (VLQS…ALDP). The residue at position 98 (serine 98) is a Phosphoserine. LRR repeat units lie at residues 442 to 463 (EVRV…EQLL), 464 to 486 (LVTH…AALR), 487 to 508 (CLEV…TNLP), 509 to 530 (RLQE…QPLT), and 534 to 555 (RLTL…SEHL).

It belongs to the protein prenyltransferase subunit alpha family. Heterotrimer composed of RABGGTA, RABGGTB and CHM; within this trimer, RABGGTA and RABGGTB form the catalytic component B, while CHM (component A) mediates peptide substrate binding. The Rab GGTase dimer (RGGT) interacts with CHM (component A) prior to Rab protein binding; the association is stabilized by geranylgeranyl pyrophosphate (GGpp). The CHM:RGGT:Rab complex is destabilized by GGpp. Interacts with non-phosphorylated form of RAB8A; phosphorylation of RAB8A at 'Thr-72' disrupts this interaction.

It catalyses the reaction geranylgeranyl diphosphate + L-cysteinyl-[protein] = S-geranylgeranyl-L-cysteinyl-[protein] + diphosphate. The enzymatic reaction requires the aid of a Rab escort protein (also called component A), such as CHM. Catalyzes the transfer of a geranylgeranyl moiety from geranylgeranyl diphosphate to both cysteines of Rab proteins with the C-terminal sequence -XXCC, -XCXC and -CCXX, such as RAB1A, RAB3A, RAB5A and RAB7A. The chain is Geranylgeranyl transferase type-2 subunit alpha (RABGGTA) from Bos taurus (Bovine).